Consider the following 1431-residue polypeptide: Stabilin-2 (1431 aa).

The Extracellular segment spans residues 1 to 1322; sequence SLPSLLTRLE…PPTAATAAHS (1322 aa). The FAS1 domain occupies 2–130; the sequence is LPSLLTRLEQ…GVIHGLEKVL (129 aa). N-linked (GlcNAc...) asparagine glycans are attached at residues asparagine 112 and asparagine 140. Residues 207 to 272 form the Laminin EGF-like 1 domain; it reads PQCQACPGRG…CSCVHGRCSQ (66 aa). Disulfide bonds link cysteine 212-cysteine 226, cysteine 220-cysteine 236, cysteine 238-cysteine 247, cysteine 259-cysteine 270, cysteine 263-cysteine 280, cysteine 282-cysteine 291, cysteine 300-cysteine 310, cysteine 304-cysteine 320, cysteine 322-cysteine 333, cysteine 339-cysteine 352, cysteine 346-cysteine 362, cysteine 364-cysteine 375, cysteine 381-cysteine 394, cysteine 388-cysteine 404, cysteine 406-cysteine 417, cysteine 423-cysteine 436, cysteine 430-cysteine 446, and cysteine 448-cysteine 459. Asparagine 231 and asparagine 243 each carry an N-linked (GlcNAc...) asparagine glycan. EGF-like domains are found at residues 296–334, 335–376, 377–418, and 419–460; these read TTDN…TVCT, AINA…IVCL, EINP…KVCS, and LINV…IVCR. Asparagine 301 carries N-linked (GlcNAc...) asparagine glycosylation. Residue asparagine 329 is glycosylated (N-linked (GlcNAc...) asparagine). N-linked (GlcNAc...) asparagine glycosylation occurs at asparagine 437. FAS1 domains are found at residues 460 to 588 and 604 to 745; these read RGSI…DKLL and VLQN…DCLL. Asparagine 607 carries an N-linked (GlcNAc...) asparagine glycan. In terms of domain architecture, Laminin EGF-like 2 spans 822-887; that stretch reads PDCQACPGGP…SCSEHGQCDE (66 aa). 6 disulfide bridges follow: cysteine 827–cysteine 841, cysteine 835–cysteine 851, cysteine 853–cysteine 862, cysteine 874–cysteine 885, cysteine 879–cysteine 895, and cysteine 897–cysteine 906. Asparagine 858 carries N-linked (GlcNAc...) asparagine glycosylation. Asparagine 929 carries N-linked (GlcNAc...) asparagine glycosylation. EGF-like domains lie at 947-987 and 988-1030; these read VVDF…YSCI and EIDP…VDCE. Disulfide bonds link cysteine 951-cysteine 964, cysteine 958-cysteine 973, cysteine 975-cysteine 986, cysteine 992-cysteine 1006, cysteine 1000-cysteine 1016, cysteine 1018-cysteine 1029, cysteine 1085-cysteine 1154, and cysteine 1109-cysteine 1130. The Link domain maps to 1063–1156; the sequence is GVFHLRSPLG…SEMWDVFCYR (94 aa). Asparagine 1145, asparagine 1161, asparagine 1233, asparagine 1249, and asparagine 1258 each carry an N-linked (GlcNAc...) asparagine glycan. Residues 1176-1310 enclose the FAS1 4 domain; it reads SGNLLQVLMS…GILHIISEPL (135 aa). A helical transmembrane segment spans residues 1323–1343; it reads GLGTGIFCAVVLVTGAIALAA. Residues 1344-1431 lie on the Cytoplasmic side of the membrane; it reads YSYFRLKQRT…QQATTVTVPR (88 aa). The interval 1368–1378 is interaction with TMSB4X; that stretch reads WLLASSSPRIS.

As to quaternary structure, interacts with GULP1, heparin, alpha-M/beta-2 integrin (ITGAM and ITGB2), and thymosin beta 4 (TMSB4X). Glycosylated. In terms of processing, proteolytically processed to yield a 175 kDa protein. Initially expressed in all vascular cells, including those of sinusoidal-like structures, vitellin veins, and hepatic veins or sinus venosus, in E13.5 fetal liver. The expression then progressively disappears in the portal and hepatic veins, but the expression in sinusoidals endothelial cells (SECs) is retained and becomes stronger during development.

It localises to the cytoplasm. The protein resides in the cell membrane. Its function is as follows. Phosphatidylserine receptor that enhances the engulfment of apoptotic cells. Hyaluronan receptor that binds to and mediates endocytosis of hyaluronic acid (HA). Also acts, in different species, as a primary systemic scavenger receptor for heparin (Hep), chondroitin sulfate (CS), dermatan sulfate (DS), nonglycosaminoglycan (GAG), acetylated low-density lipoprotein (AcLDL), pro-collagen propeptides and advanced glycation end products (AGE). May serve to maintain tissue integrity by supporting extracellular matrix turnover or it may contribute to maintaining fluidity of bodily liquids by resorption of hyaluronan. Counter receptor which plays an important role in lymphocyte recruitment in the hepatic vasculature. Binds to both Gram-positive and Gram-negative bacteria and may play a role in defense against bacterial infection. The proteolytically processed 175 kDa form also functions as an endocytosis receptor for heparin internalization as well as HA and CS. The chain is Stabilin-2 from Rattus norvegicus (Rat).